We begin with the raw amino-acid sequence, 366 residues long: Subtilisin-like protease het-Q2 (366 aa).

Residues 1 to 321 enclose the Peptidase S8 domain; the sequence is MSAISHHSLS…RVLMALGEKT (321 aa). Asp35 acts as the Charge relay system in catalysis. Residues 79 to 98 are disordered; the sequence is DFCQPSPPGDRQGPPPQPHS. Over residues 83–96 the composition is skewed to pro residues; the sequence is PSPPGDRQGPPPQP. Catalysis depends on charge relay system residues His105 and Ser266. A helical transmembrane segment spans residues 261–283; sequence LVSGSSFATPVVVSVAALVLAFV.

This sequence belongs to the peptidase S8 family.

The protein localises to the membrane. Functionally, serine protease involved in heterokaryon incompatibility, a process that ensures that during spontaneous vegetative cell fusion, only compatible cells from the same colony survive (non-self-recognition). In P.anserina, the het-q locus exists as 2 incompatible alleles, het-Q1 (AC B2AXJ5) and het-Q2 (this entry). Prevents cell fusion with strains containing the gasdermin-like protein het-Q1 by mediating proteolytic cleavage and maturation of het-Q1 during the allorecognition process, thereby triggering cell death. This is Subtilisin-like protease het-Q2 from Podospora anserina (Pleurage anserina).